The following is a 397-amino-acid chain: Succinate--CoA ligase [ADP-forming] subunit beta (397 aa).

The region spanning 9 to 253 (KEILASYGVR…IREENPIEVE (245 aa)) is the ATP-grasp domain. ATP-binding positions include Lys-50, 57-59 (GRG), Val-106, and Glu-116. Mg(2+) is bound by residues Asn-208 and Asp-222. Substrate contacts are provided by residues Asn-273 and 330–332 (GIV).

The protein belongs to the succinate/malate CoA ligase beta subunit family. In terms of assembly, heterotetramer of two alpha and two beta subunits. Mg(2+) serves as cofactor.

It carries out the reaction succinate + ATP + CoA = succinyl-CoA + ADP + phosphate. The catalysed reaction is GTP + succinate + CoA = succinyl-CoA + GDP + phosphate. It participates in carbohydrate metabolism; tricarboxylic acid cycle; succinate from succinyl-CoA (ligase route): step 1/1. Succinyl-CoA synthetase functions in the citric acid cycle (TCA), coupling the hydrolysis of succinyl-CoA to the synthesis of either ATP or GTP and thus represents the only step of substrate-level phosphorylation in the TCA. The beta subunit provides nucleotide specificity of the enzyme and binds the substrate succinate, while the binding sites for coenzyme A and phosphate are found in the alpha subunit. This is Succinate--CoA ligase [ADP-forming] subunit beta from Flavobacterium johnsoniae (strain ATCC 17061 / DSM 2064 / JCM 8514 / BCRC 14874 / CCUG 350202 / NBRC 14942 / NCIMB 11054 / UW101) (Cytophaga johnsonae).